The chain runs to 400 residues: Serine/threonine transporter SstT (400 aa).

9 helical membrane passes run 14-34, 48-68, 76-96, 136-156, 177-197, 211-231, 285-305, 311-331, and 349-371; these read IIIA…VTPY, SVAP…FQVG, VLLL…IASL, AISE…GLAM, IIHK…AVTF, LLVV…PILV, IPLG…VLTL, LGIH…TISA, and CSLF…IISV.

Belongs to the dicarboxylate/amino acid:cation symporter (DAACS) (TC 2.A.23) family.

It localises to the cell inner membrane. It catalyses the reaction L-serine(in) + Na(+)(in) = L-serine(out) + Na(+)(out). The catalysed reaction is L-threonine(in) + Na(+)(in) = L-threonine(out) + Na(+)(out). In terms of biological role, involved in the import of serine and threonine into the cell, with the concomitant import of sodium (symport system). The polypeptide is Serine/threonine transporter SstT (Acinetobacter baumannii (strain AB307-0294)).